We begin with the raw amino-acid sequence, 350 residues long: NADH-quinone oxidoreductase subunit H (350 aa).

The next 8 helical transmembrane spans lie at 31 to 51 (LMLL…LFLI), 102 to 122 (LLAP…IPFG), 132 to 152 (LGVL…WMAG), 171 to 191 (MLSY…MAGS), 205 to 225 (WFIF…NAEF), 263 to 283 (FMIG…APFG), 286 to 306 (FIPS…LYMW), and 322 to 342 (FAWK…GFGL).

The protein belongs to the complex I subunit 1 family. As to quaternary structure, NDH-1 is composed of 14 different subunits. Subunits NuoA, H, J, K, L, M, N constitute the membrane sector of the complex.

Its subcellular location is the cell membrane. It carries out the reaction a quinone + NADH + 5 H(+)(in) = a quinol + NAD(+) + 4 H(+)(out). In terms of biological role, NDH-1 shuttles electrons from NADH, via FMN and iron-sulfur (Fe-S) centers, to quinones in the respiratory chain. The immediate electron acceptor for the enzyme in this species is believed to be ubiquinone. Couples the redox reaction to proton translocation (for every two electrons transferred, four hydrogen ions are translocated across the cytoplasmic membrane), and thus conserves the redox energy in a proton gradient. This subunit may bind ubiquinone. The polypeptide is NADH-quinone oxidoreductase subunit H (Carboxydothermus hydrogenoformans (strain ATCC BAA-161 / DSM 6008 / Z-2901)).